A 119-amino-acid polypeptide reads, in one-letter code: Small ribosomal subunit protein uS13 (119 aa).

The segment at 92–119 (RRGLPVRGQQTQTNARTRKGPRRGPASR) is disordered.

This sequence belongs to the universal ribosomal protein uS13 family. Part of the 30S ribosomal subunit. Forms a loose heterodimer with protein S19. Forms two bridges to the 50S subunit in the 70S ribosome.

Located at the top of the head of the 30S subunit, it contacts several helices of the 16S rRNA. In the 70S ribosome it contacts the 23S rRNA (bridge B1a) and protein L5 of the 50S subunit (bridge B1b), connecting the 2 subunits; these bridges are implicated in subunit movement. Contacts the tRNAs in the A and P-sites. This Halorhodospira halophila (strain DSM 244 / SL1) (Ectothiorhodospira halophila (strain DSM 244 / SL1)) protein is Small ribosomal subunit protein uS13.